A 532-amino-acid polypeptide reads, in one-letter code: Probable inorganic phosphate transporter 1-9 (532 aa).

Residues 1–22 (MPELSLLSALDAARIQWYHFKA) lie on the Cytoplasmic side of the membrane. A helical transmembrane segment spans residues 23 to 43 (IIVAGMGLFTDAYDLFCIAPI). The Extracellular portion of the chain corresponds to 44–62 (MKMISQIYYHKDSIGTALL). The chain crosses the membrane as a helical span at residues 63 to 83 (STSYAIALLGTALGQLIFGYL). The Cytoplasmic segment spans residues 84 to 91 (GDRVGRRK). The chain crosses the membrane as a helical span at residues 92-112 (VYGLSLLIMVFSSFGCGFSVC). At 113 to 124 (TTRRSCVMVSLG) the chain is on the extracellular side. The helical transmembrane segment at 125 to 145 (FFRFVLGLGIGGDYPLSATIM) threads the bilayer. Over 146–154 (SEFANKRTR) the chain is Cytoplasmic. Residues 155–175 (GAFIAAVFSMQGLGILMSSAV) form a helical membrane-spanning segment. Residues 176-207 (TMVVCLAFKNAGEGSSEKTNVAGLETLAPPES) are Extracellular-facing. Residues 208-228 (DIAWRLILMIGALPAALTFYW) form a helical membrane-spanning segment. The Cytoplasmic segment spans residues 229-292 (RMLMPETARY…KLFSRRFLSL (64 aa)). A helical transmembrane segment spans residues 293–313 (HGRDLFAASANWFLVDVVFYT). Topologically, residues 314–343 (SNLLLSQIFNFSNKPLNSTNVYDSAFEVAK) are extracellular. Residues 344–364 (LAAIVAACSTIPGYWFTVYFI) form a helical membrane-spanning segment. Over 365-371 (DKIGRVK) the chain is Cytoplasmic. Residues 372–392 (IQMMGFFLMAVVYLVAGIPYS) traverse the membrane as a helical segment. Residues 393–406 (WYWSKHEKTNKGFM) are Extracellular-facing. A helical membrane pass occupies residues 407–427 (VLYGLIFFFSNFGPNTTTFII). Residues 428–441 (PAELFPARFRSTCH) lie on the Cytoplasmic side of the membrane. The helical transmembrane segment at 442 to 462 (GISGAAGKFGAIVGTVGFLWA) threads the bilayer. The Extracellular portion of the chain corresponds to 463-478 (TRHHEEDGFPDVKRVR). Residues 479–499 (IAFLILGGVCIAGMIVTYLFT) traverse the membrane as a helical segment. The Cytoplasmic segment spans residues 500–532 (RETMGRSLEENEDEIVSTSAGSSPANELLRRQY). Positions 509–532 (ENEDEIVSTSAGSSPANELLRRQY) are disordered. A compositionally biased stretch (polar residues) spans 515–524 (VSTSAGSSPA).

This sequence belongs to the major facilitator superfamily. Phosphate:H(+) symporter (TC 2.A.1.9) family.

It is found in the membrane. In terms of biological role, high-affinity transporter for external inorganic phosphate. The chain is Probable inorganic phosphate transporter 1-9 (PHT1-9) from Arabidopsis thaliana (Mouse-ear cress).